The primary structure comprises 25 residues: Caerin-1.17 (25 aa).

Leucine amide is present on L25.

It belongs to the frog skin active peptide (FSAP) family. Caerin subfamily. Expressed by the skin dorsal glands.

It localises to the secreted. In terms of biological role, caerin-1.17 shows significant activity against Gram-positive organisms, but is less effective against Gram-negative organisms. The protein is Caerin-1.17 of Ranoidea gracilenta (Dainty green tree frog).